The following is a 638-amino-acid chain: ATP-dependent zinc metalloprotease FtsH (638 aa).

Over 1 to 15 (MDNNHKGPNDPNSKK) the chain is Cytoplasmic. The chain crosses the membrane as a helical span at residues 16-36 (PLLQNPLLLIAIFGIIIFVAM). At 37–122 (RVMNSDEGFG…INYSGFSESN (86 aa)) the chain is on the periplasmic side. Residues 123–143 (FFADILGWLLPVLVILGLWMF) traverse the membrane as a helical segment. Topologically, residues 144–638 (MASRMQKNMG…RLVPLEEHAS (495 aa)) are cytoplasmic. 216–223 (GPPGTGKT) is an ATP binding site. Position 440 (His-440) interacts with Zn(2+). Glu-441 is an active-site residue. 2 residues coordinate Zn(2+): His-444 and Asp-517.

It in the central section; belongs to the AAA ATPase family. In the C-terminal section; belongs to the peptidase M41 family. Homohexamer. It depends on Zn(2+) as a cofactor.

The protein resides in the cell inner membrane. Its function is as follows. Acts as a processive, ATP-dependent zinc metallopeptidase for both cytoplasmic and membrane proteins. Plays a role in the quality control of integral membrane proteins. In Helicobacter felis (strain ATCC 49179 / CCUG 28539 / NCTC 12436 / CS1), this protein is ATP-dependent zinc metalloprotease FtsH.